Reading from the N-terminus, the 78-residue chain is RNA-binding protein Hfq (78 aa).

The Sm domain maps to 10-69 (DPFLNALRKEHVPVSIYLVNGIKLQGNIESFDQYVVLLRNTVTQMVYKHAISTVVPARPV).

It belongs to the Hfq family. In terms of assembly, homohexamer.

In terms of biological role, RNA chaperone that binds small regulatory RNA (sRNAs) and mRNAs to facilitate mRNA translational regulation in response to envelope stress, environmental stress and changes in metabolite concentrations. Also binds with high specificity to tRNAs. This is RNA-binding protein Hfq from Paraburkholderia phymatum (strain DSM 17167 / CIP 108236 / LMG 21445 / STM815) (Burkholderia phymatum).